An 815-amino-acid polypeptide reads, in one-letter code: Dual specificity tyrosine-phosphorylation-regulated kinase mbk-2 (815 aa).

Disordered stretches follow at residues 1–49 (MAAL…NYTR), 67–146 (PSSF…PLGT), 185–204 (YEFPSGQAQQQRRLGGSQQH), and 298–395 (ALPS…FRPE). Composition is skewed to polar residues over residues 7 to 25 (FTRNSRSYGQQPIDVTQQG) and 40 to 49 (SKMSNINYTR). Over residues 68–78 (SSFSGASSSSS) the composition is skewed to low complexity. Composition is skewed to polar residues over residues 119-140 (SGNTLTRSYHQPSSTNSSTSNL) and 190-204 (GQAQQQRRLGGSQQH). The span at 301-316 (SVGTSSSNGSSNSSSG) shows a compositional bias: low complexity. The segment covering 325-351 (LMTQSIGGPNKHLSASHSTLNTASTHD) has biased composition (polar residues). Residue Ser-361 is modified to Phosphoserine; by cdk-1. Over residues 363-391 (SNESLSRSHTSSSGGSQGGHNSNSGSNSG) the composition is skewed to low complexity. The region spanning 460 to 773 (YEVLKVIGKG…PAQALKHKWL (314 aa)) is the Protein kinase domain. Residues 466 to 474 (IGKGSFGQV) and Lys-489 each bind ATP. Asp-586 serves as the catalytic Proton acceptor. The residue at position 620 (Tyr-620) is a Phosphotyrosine; by autocatalysis.

It belongs to the protein kinase superfamily. CMGC Ser/Thr protein kinase family. MNB/DYRK subfamily. As to quaternary structure, part of a complex, consisting of pseudophosphatases egg-3, egg-4, egg-5 and kinase mbk-2. Interacts (via Tyr-618 and Tyr-620) with egg-4 (via tyrosine-protein phosphatase domain) and egg-5 (via tyrosine-protein phosphatase domain); mbk-2 tyrosine phosphorylation enhances the interaction. The interaction inhibits mbk-2 kinase activity and is required for mbk-2 oocyte cortex localization. Interacts (via N-terminus) with egg-3 (via tyrosine-protein phosphatase domain); the interaction does not affect mbk-2 kinase activity, is enhanced by mbk-2 tyrosine phosphorylation status and requires prior binding of mbk-2 to egg-4 and egg-5. Mg(2+) serves as cofactor. In terms of processing, autophosphorylated.

Its subcellular location is the cytoplasm. It is found in the cell cortex. It catalyses the reaction L-seryl-[protein] + ATP = O-phospho-L-seryl-[protein] + ADP + H(+). The catalysed reaction is L-threonyl-[protein] + ATP = O-phospho-L-threonyl-[protein] + ADP + H(+). The enzyme catalyses L-tyrosyl-[protein] + ATP = O-phospho-L-tyrosyl-[protein] + ADP + H(+). Its activity is regulated as follows. Activated during oocyte maturation by phosphorylation on Ser-361 by cdk-1. The pseudotyrosine phosphatases egg-4 and egg-5 sequester activated mbk-2 until the meiotic divisions and inhibit mbk-2 kinase activity directly, using a mixed-inhibition mechanism that does not involve tyrosine dephosphorylation. Functionally, required for oocyte-to-zygote transition in which it phosphorylates oocyte proteins, including mei-1, oma-1, oma-2, mex-5, and mex-6, modifying their activity and/or stability following meiosis. Through phosphorylation of P granule components including meg-1, promotes the disassembly of zygotic P granules in the anterior cytoplasm during zygote polarization, and thus plays a role in P granule distribution and segregation in early stage embryos following meiosis. Functions in both spindle positioning and in the posterior localization of cytoplasmic determinants, including pie-1, pos-1, and pgl-1, in early embryos. Involved in the asymmetric distribution of plk-1 at the 2-cell embryonic stage. The sequence is that of Dual specificity tyrosine-phosphorylation-regulated kinase mbk-2 from Caenorhabditis briggsae.